We begin with the raw amino-acid sequence, 292 residues long: 33 kDa chaperonin (292 aa).

Cystine bridges form between Cys-230/Cys-232 and Cys-263/Cys-266.

The protein belongs to the HSP33 family. In terms of processing, under oxidizing conditions two disulfide bonds are formed involving the reactive cysteines. Under reducing conditions zinc is bound to the reactive cysteines and the protein is inactive.

The protein resides in the cytoplasm. Redox regulated molecular chaperone. Protects both thermally unfolding and oxidatively damaged proteins from irreversible aggregation. Plays an important role in the bacterial defense system toward oxidative stress. The chain is 33 kDa chaperonin from Sodalis glossinidius (strain morsitans).